A 158-amino-acid chain; its full sequence is MSASEAQVIARALFDSLTGAALQALHTATSINGEVTTERLLAALPADAPREVRNLILALGKEGNLDRLPAVVAAFEQMTRRGGARPLTGEVTSAVELSPQQRERITEQLKARYGPDLEVRFSVDESLIGGLIIRIGDQVLDTSLRTRMAAIQRNMMTG.

The protein belongs to the ATPase delta chain family. As to quaternary structure, F-type ATPases have 2 components, F(1) - the catalytic core - and F(0) - the membrane proton channel. F(1) has five subunits: alpha(3), beta(3), gamma(1), delta(1), epsilon(1). F(0) has three main subunits: a(1), b(2) and c(10-14). The alpha and beta chains form an alternating ring which encloses part of the gamma chain. F(1) is attached to F(0) by a central stalk formed by the gamma and epsilon chains, while a peripheral stalk is formed by the delta and b chains.

It localises to the cell membrane. Functionally, f(1)F(0) ATP synthase produces ATP from ADP in the presence of a proton or sodium gradient. F-type ATPases consist of two structural domains, F(1) containing the extramembraneous catalytic core and F(0) containing the membrane proton channel, linked together by a central stalk and a peripheral stalk. During catalysis, ATP synthesis in the catalytic domain of F(1) is coupled via a rotary mechanism of the central stalk subunits to proton translocation. In terms of biological role, this protein is part of the stalk that links CF(0) to CF(1). It either transmits conformational changes from CF(0) to CF(1) or is implicated in proton conduction. This is ATP synthase subunit delta from Roseiflexus castenholzii (strain DSM 13941 / HLO8).